The sequence spans 1166 residues: Tectonin beta-propeller repeat-containing protein 1 (1166 aa).

TECPR repeat units follow at residues 209–240 (LSVWAVSLQGKVWYREDVSHPNPEGSSWSLVE), 254–285 (DLIWATLWEGQALVREGVCRNNPKGSYWSMVE), 301–332 (SVVWAITKDRKVWFRRGVNSHNPCGTSWIEMV), and 344–376 (DQVWGISCEDRAVYFRQGVTPSELSGKTWKAIV). Phosphoserine is present on residues Ser386, Ser388, Ser391, Ser413, and Ser418. The interval 404-496 (RGSGTESAPS…PAELPWTNID (93 aa)) is disordered. The segment covering 407-416 (GTESAPSDTD) has biased composition (polar residues). The segment covering 451-462 (TSGNTDHSTENA) has biased composition (polar residues). Basic and acidic residues predominate over residues 466–481 (EGKEKAPETSRSDECR). The 107-residue stretch at 616-722 (KTGALQWWCD…WLALLSLSCC (107 aa)) folds into the PH domain. The stretch at 734–761 (QAIWSVTCKGDIFVSEPSPDLEARERLL) is one TECPR 5 repeat. Residue Ser943 is modified to Phosphoserine. TECPR repeat units follow at residues 958–989 (VALWAVSDKGDVLCRLGVSELNPAGSSWLHVG), 1003–1034 (YQVWAVARDGSAFYRGSVSPSQPAGDCWYHIP), 1049–1080 (TSVYALDENGNLWYRAGITPSYPQGSSWEHVS), and 1092–1132 (DQVW…DYGI).

It belongs to the TECPR1 family. Interacts with ATG5; the interaction is direct. Interacts with WIPI2. Interacts with the ATG5-ATG12 conjugate, the interaction is however mutually exclusive with ATG16, since it does not interact with ATG12-ATG5-ATG16 complex.

The protein resides in the cytoplasmic vesicle. The protein localises to the autophagosome membrane. Its subcellular location is the lysosome membrane. In terms of biological role, tethering factor involved in autophagy. Involved in autophagosome maturation by promoting the autophagosome fusion with lysosomes: acts by associating with both the ATG5-ATG12 conjugate and phosphatidylinositol-3-phosphate (PtdIns(3)P) present at the surface of autophagosomes. Also involved in selective autophagy against bacterial pathogens, by being required for phagophore/preautophagosomal structure biogenesis and maturation. This is Tectonin beta-propeller repeat-containing protein 1 (Tecpr1) from Mus musculus (Mouse).